The chain runs to 307 residues: Lipoyl synthase (307 aa).

Residues Cys55, Cys60, Cys66, Cys81, Cys85, Cys88, and Ser292 each contribute to the [4Fe-4S] cluster site. The Radical SAM core domain maps to 67 to 281; that stretch reads WEDREATFLI…ARHAEELGFS (215 aa).

Belongs to the radical SAM superfamily. Lipoyl synthase family. Requires [4Fe-4S] cluster as cofactor.

The protein localises to the cytoplasm. The enzyme catalyses [[Fe-S] cluster scaffold protein carrying a second [4Fe-4S](2+) cluster] + N(6)-octanoyl-L-lysyl-[protein] + 2 oxidized [2Fe-2S]-[ferredoxin] + 2 S-adenosyl-L-methionine + 4 H(+) = [[Fe-S] cluster scaffold protein] + N(6)-[(R)-dihydrolipoyl]-L-lysyl-[protein] + 4 Fe(3+) + 2 hydrogen sulfide + 2 5'-deoxyadenosine + 2 L-methionine + 2 reduced [2Fe-2S]-[ferredoxin]. The protein operates within protein modification; protein lipoylation via endogenous pathway; protein N(6)-(lipoyl)lysine from octanoyl-[acyl-carrier-protein]: step 2/2. Catalyzes the radical-mediated insertion of two sulfur atoms into the C-6 and C-8 positions of the octanoyl moiety bound to the lipoyl domains of lipoate-dependent enzymes, thereby converting the octanoylated domains into lipoylated derivatives. This Mycolicibacterium paratuberculosis (strain ATCC BAA-968 / K-10) (Mycobacterium paratuberculosis) protein is Lipoyl synthase.